The following is a 721-amino-acid chain: Putative cullin-like protein 1 (721 aa).

In terms of domain architecture, Cullin neddylation spans 651–713 (DRRYAIDAAL…RDYLERDTEN (63 aa)).

The protein belongs to the cullin family.

The protein is Putative cullin-like protein 1 of Arabidopsis thaliana (Mouse-ear cress).